The primary structure comprises 423 residues: Diels-Alderase pyiF (423 aa).

The first 17 residues, 1-17, serve as a signal peptide directing secretion; it reads MLPSFIFVYSLLATATA. Residues N60, N92, and N219 are each glycosylated (N-linked (GlcNAc...) asparagine).

Belongs to the Diels-Alderase family.

It participates in mycotoxin biosynthesis. In terms of biological role, diels-Alderase; part of the gene cluster that mediates the biosynthesis of the mycotoxin pyrichalasin H, a tyrosine-derived cytochalasan that inhibits the growth of rice seedlings, but also inhibits lymphocyte capping and actin polymerization and alters cell morphology. Pyrichalasin H is indicated as the responsible agent for the genus-specific pathogenicity of M.grisea toward crabgrass. The first step in the pathway is catalyzed by the O-methyltransferase pyiA which methylates free tyrosine to generate the precursor O-methyltyrosine. The hybrid PKS-NRPS pyiS, assisted by the enoyl reductase pyiC, are responsible for fusion of the O-methyltyrosine precursor and the polyketide backbone. The polyketide synthase module (PKS) of pyiS is responsible for the synthesis of the polyketide backbone and the downstream nonribosomal peptide synthetase (NRPS) amidates the carboxyl end of the polyketide with the O-methyltyrosine precursor. As the NRPS A-domain demonstrates substrate tolerance, pyiS can also use phenylalanine, tyrosine and even para-chlorophenylalanine as amino acid precursor, which leads to the production of novel cytochalasans, including halogenated cytochalasans. Because pyiS lacks a designated enoylreductase (ER) domain, the required activity is provided the enoyl reductase pyiC. Reduction by the hydrolyase pyiE leads to 1,5-dihydropyrrolone, which is substrate for dehydration and intra-molecular Diels-Alder cyclization by the Diels-Alderase pyiF to yield the required isoindolone-fused macrocycle. The tailoring cytochrome P450 monooxygenases piyD and piyG catalyze the hydroxylation at C-18 and C-7, respectivily, whereas the short-chain dehydrogenase/reductase pyiH reduces the carbonyl at C-21 in preparation for the transfer of an acetyl group by the acetyltransferase pyiB. These 3 reactions whose order is not clear yet, lead to the production of O-methylpyrichalasin J, a deacetylated pyrichalasin H. Finally, pyiB to converts O-methylpyrichalasin J into the final product pyrichalasin H via acetylation of C-21. This chain is Diels-Alderase pyiF, found in Pyricularia grisea (Crabgrass-specific blast fungus).